The sequence spans 132 residues: Large-conductance mechanosensitive channel (132 aa).

Helical transmembrane passes span 14-34, 38-58, and 69-89; these read VIDL…VSSL, IITP…LKIT, and FIQT…FVKV.

This sequence belongs to the MscL family. In terms of assembly, homopentamer.

The protein resides in the cell membrane. Channel that opens in response to stretch forces in the membrane lipid bilayer. May participate in the regulation of osmotic pressure changes within the cell. The chain is Large-conductance mechanosensitive channel from Bacillus thuringiensis (strain Al Hakam).